A 591-amino-acid chain; its full sequence is Potassium channel KAT4 (591 aa).

Residues 1 to 32 lie on the Cytoplasmic side of the membrane; sequence MAARSELLRPAFGEASPSLGRFVINPHSCSYR. Residues 33 to 53 form a helical membrane-spanning segment; that stretch reads WWHMFLIMLVLYSAWASPFEL. Residues 54–63 lie on the Extracellular side of the membrane; sequence SMEKAASIAL. The helical transmembrane segment at 64–84 threads the bilayer; that stretch reads VVTDLVVDVFFAIDIALSFFV. At 85–109 the chain is on the cytoplasmic side; that stretch reads AYRDTSTGLLITDRRKITMRYLKRP. The chain crosses the membrane as a helical span at residues 110–130; sequence CFALDVASTIPLQIIYQLVTG. The Extracellular portion of the chain corresponds to 131-137; that stretch reads KRQGLWG. Residues 138-158 form a helical; Voltage-sensor membrane-spanning segment; sequence LLNLLRLWRLRRVSKLFARVE. At 159 to 172 the chain is on the cytoplasmic side; sequence KDIRFNYLWTRLIK. A helical transmembrane segment spans residues 173–193; it reads LLCVTLFALHFAACIYLWMAF. The Extracellular segment spans residues 194–220; that stretch reads NYKIKELTWIGSQIHSFEDRSVWFCYT. An intramembrane region (pore-forming) is located at residues 221 to 240; the sequence is CAVYWSITTLATVGYGDLHA. The Extracellular segment spans residues 241-246; sequence TNIGEM. The chain crosses the membrane as a helical span at residues 247-267; it reads LFSIAFMLFNMGLTSYIIGNI. Over 268-591 the chain is Cytoplasmic; sequence TNLVVRETSN…IRDGDHLLFS (324 aa). 349–469 lines the a nucleoside 3',5'-cyclic phosphate pocket; the sequence is LFQGVSDSLI…YIVFSNFIQY (121 aa). A KHA domain is found at 521 to 591; the sequence is RVVIHEQLPN…IRDGDHLLFS (71 aa).

It belongs to the potassium channel family. Plant (TC 1.A.1.4) subfamily.

It is found in the membrane. Functionally, probable inward-rectifying potassium channel. Assuming opened or closed conformations in response to the voltage difference across the membrane, the channel is activated by hyperpolarization. In Oryza sativa subsp. japonica (Rice), this protein is Potassium channel KAT4.